Consider the following 357-residue polypeptide: uncharacterized protein (357 aa).

The segment at residues 6–32 (CIVCRQKKIKCDRKNPCTNCEQAGEKC) is a DNA-binding region (zn(2)-C6 fungal-type).

The protein resides in the nucleus. This is an uncharacterized protein from Schizosaccharomyces pombe (strain 972 / ATCC 24843) (Fission yeast).